Here is a 119-residue protein sequence, read N- to C-terminus: Large ribosomal subunit protein bL19 (119 aa).

The protein belongs to the bacterial ribosomal protein bL19 family.

Functionally, this protein is located at the 30S-50S ribosomal subunit interface and may play a role in the structure and function of the aminoacyl-tRNA binding site. The polypeptide is Large ribosomal subunit protein bL19 (Pediococcus pentosaceus (strain ATCC 25745 / CCUG 21536 / LMG 10740 / 183-1w)).